A 105-amino-acid chain; its full sequence is Integration host factor subunit beta (105 aa).

Belongs to the bacterial histone-like protein family. As to quaternary structure, heterodimer of an alpha and a beta chain.

Its function is as follows. This protein is one of the two subunits of integration host factor, a specific DNA-binding protein that functions in genetic recombination as well as in transcriptional and translational control. In Nitrosomonas eutropha (strain DSM 101675 / C91 / Nm57), this protein is Integration host factor subunit beta.